Consider the following 436-residue polypeptide: Methylenetetrahydrofolate--tRNA-(uracil-5-)-methyltransferase TrmFO (436 aa).

10 to 15 (GAGLAG) is an FAD binding site.

Belongs to the MnmG family. TrmFO subfamily. Requires FAD as cofactor.

The protein resides in the cytoplasm. The catalysed reaction is uridine(54) in tRNA + (6R)-5,10-methylene-5,6,7,8-tetrahydrofolate + NADH + H(+) = 5-methyluridine(54) in tRNA + (6S)-5,6,7,8-tetrahydrofolate + NAD(+). It carries out the reaction uridine(54) in tRNA + (6R)-5,10-methylene-5,6,7,8-tetrahydrofolate + NADPH + H(+) = 5-methyluridine(54) in tRNA + (6S)-5,6,7,8-tetrahydrofolate + NADP(+). In terms of biological role, catalyzes the folate-dependent formation of 5-methyl-uridine at position 54 (M-5-U54) in all tRNAs. The chain is Methylenetetrahydrofolate--tRNA-(uracil-5-)-methyltransferase TrmFO from Staphylococcus carnosus (strain TM300).